Consider the following 363-residue polypeptide: UDP-3-O-acylglucosamine N-acyltransferase (363 aa).

Catalysis depends on histidine 239, which acts as the Proton acceptor. Residues 342–363 (LSEMKKEVEKEKESSREKEETK) form a disordered region.

It belongs to the transferase hexapeptide repeat family. LpxD subfamily. As to quaternary structure, homotrimer.

It carries out the reaction a UDP-3-O-[(3R)-3-hydroxyacyl]-alpha-D-glucosamine + a (3R)-hydroxyacyl-[ACP] = a UDP-2-N,3-O-bis[(3R)-3-hydroxyacyl]-alpha-D-glucosamine + holo-[ACP] + H(+). Its pathway is bacterial outer membrane biogenesis; LPS lipid A biosynthesis. Its function is as follows. Catalyzes the N-acylation of UDP-3-O-acylglucosamine using 3-hydroxyacyl-ACP as the acyl donor. Is involved in the biosynthesis of lipid A, a phosphorylated glycolipid that anchors the lipopolysaccharide to the outer membrane of the cell. The protein is UDP-3-O-acylglucosamine N-acyltransferase of Syntrophus aciditrophicus (strain SB).